The chain runs to 570 residues: MTEPIISFKDFSFQYHSQATPTLQKINVDIYPGEKVLVVGASGSGKSTFANCINGLIPFKTKGNITGELYINNQDATVSCLHDRSNVVGTVLQDTDGQFIGLTAAEDMAFLLENNCVEQDDMKKNVSYWAEKVGMIEHLNHRPQDLSGGQKQRVSLGGILIHRTPILILDEPLANLDPATGHETLRLLNNIHEETKSTMIIVEHRLEESLDDTFDRVLLFKDGKIIANTTPSDLLKSSKLKEAGIREPLYCTALKYAEVDVESIDNLANLRDVCMSEHVKFKVKKWIDETSANNDNKYKSEPLLELNEVCVQYSDYSNSVLNNVQLNVYRREMLSIVGHNGAGKSTLAKAICGFLDITGNIQFCNRGFNQLSISERSEFVGYVMQNPNHMISEKMIYDEVALGLRARGMKESDIKIRVENVLKICGLYAFRNWPIVALSYGQKKRVTIASVLVLNPEIIILDEPTAGQDFYHYNEIMSFLIELNRQGKTIIMITHDMHLLSEYSSRTVVLSKGQVVADTTPVLVLNDKKICEIASLRQTSLFEMAEYIGISEPQKLVQLFINHDRKVRRQ.

ABC transporter domains follow at residues 6–247 and 304–537; these read ISFK…GIRE and LELN…ASLR. ATP-binding positions include 40–47 and 338–345; these read GASGSGKS and GHNGAGKS.

This sequence belongs to the ABC transporter superfamily.

The protein resides in the cell membrane. Probably part of an ABC transporter complex. Responsible for energy coupling to the transport system. This chain is Putative ABC transporter ATP-binding protein MW2603, found in Staphylococcus aureus (strain MW2).